Here is a 445-residue protein sequence, read N- to C-terminus: C4-dicarboxylate transport protein (445 aa).

A run of 8 helical transmembrane segments spans residues 24–44 (VLYI…WLSP), 62–82 (LIKM…IAHI), 105–125 (FALI…GLAA), 163–183 (GDIL…MALG), 201–221 (FGVI…AMAF), 237–257 (LVAL…GVIA), 322–342 (IYMT…LSFS), and 370–390 (AGTL…VFSI).

It belongs to the dicarboxylate/amino acid:cation symporter (DAACS) (TC 2.A.23) family.

It localises to the cell inner membrane. Functionally, responsible for the transport of dicarboxylates such as succinate, fumarate, and malate from the periplasm across the membrane. This is C4-dicarboxylate transport protein from Rhodopseudomonas palustris (strain HaA2).